The primary structure comprises 632 residues: Phosphomethylpyrimidine synthase (632 aa).

Residues asparagine 237, methionine 266, tyrosine 295, histidine 331, 351–353, 392–395, and glutamate 431 contribute to the substrate site; these read SRG and DGLR. A Zn(2+)-binding site is contributed by histidine 435. Tyrosine 458 serves as a coordination point for substrate. Histidine 499 is a Zn(2+) binding site. Positions 579, 582, and 587 each coordinate [4Fe-4S] cluster.

This sequence belongs to the ThiC family. Homodimer. [4Fe-4S] cluster serves as cofactor.

The catalysed reaction is 5-amino-1-(5-phospho-beta-D-ribosyl)imidazole + S-adenosyl-L-methionine = 4-amino-2-methyl-5-(phosphooxymethyl)pyrimidine + CO + 5'-deoxyadenosine + formate + L-methionine + 3 H(+). It participates in cofactor biosynthesis; thiamine diphosphate biosynthesis. Catalyzes the synthesis of the hydroxymethylpyrimidine phosphate (HMP-P) moiety of thiamine from aminoimidazole ribotide (AIR) in a radical S-adenosyl-L-methionine (SAM)-dependent reaction. The chain is Phosphomethylpyrimidine synthase from Chromobacterium violaceum (strain ATCC 12472 / DSM 30191 / JCM 1249 / CCUG 213 / NBRC 12614 / NCIMB 9131 / NCTC 9757 / MK).